The sequence spans 1128 residues: Nck-associated protein 1 (1128 aa).

Positions 640 to 665 are disordered; it reads AVNKKSKKQTGKKGEPEREKPGVESM. The span at 651 to 665 shows a compositional bias: basic and acidic residues; sequence KKGEPEREKPGVESM. The chain crosses the membrane as a helical span at residues 995–1015; that stretch reads IACLLMVFVAVSMPTLASNVM.

This sequence belongs to the HEM-1/HEM-2 family.

It localises to the cell membrane. Its subcellular location is the cell projection. The protein resides in the lamellipodium membrane. Its function is as follows. Part of the WAVE complex that regulates lamellipodia formation. The WAVE complex regulates actin filament reorganization via its interaction with the Arp2/3 complex. Actin remodeling activity is regulated by RAC1. Plays a role in neural tube closure. The protein is Nck-associated protein 1 (nckap1) of Danio rerio (Zebrafish).